The primary structure comprises 1863 residues: Breast cancer type 1 susceptibility protein (1863 aa).

At Met1 the chain carries N-acetylmethionine. An RING-type zinc finger spans residues 24–65 (CPICLELIKEPVSTKCDHIFCKFCMLKLLNQKKGPSQCPLCK). Residue Lys109 forms a Glycyl lysine isopeptide (Lys-Gly) (interchain with G-Cter in SUMO2) linkage. Ser114 is subject to Phosphoserine. The disordered stretch occupies residues 230 to 270 (ETDVTNTEHHQPSNNDLNTTEKRAAERHPEKYQGSSVSNLH). Over residues 248–260 (TTEKRAAERHPEK) the composition is skewed to basic and acidic residues. A Glycyl lysine isopeptide (Lys-Gly) (interchain with G-Cter in SUMO2) cross-link involves residue Lys301. Residues 306 to 338 (NKSKQPGLARSQHNRWAGSKETCNDRRTPSTEK) are disordered. Basic and acidic residues predominate over residues 327 to 338 (TCNDRRTPSTEK). A Glycyl lysine isopeptide (Lys-Gly) (interchain with G-Cter in SUMO2) cross-link involves residue Lys339. Phosphoserine occurs at positions 395, 398, 423, and 434. Glycyl lysine isopeptide (Lys-Gly) (interchain with G-Cter in SUMO2) cross-links involve residues Lys443, Lys459, and Lys519. The span at 534-544 (QGTNQTEQNGQ) shows a compositional bias: low complexity. The segment at 534–570 (QGTNQTEQNGQVMNITNSGHENKTKGDSIQNEKNPNP) is disordered. Ser551 is subject to Phosphoserine. Residues Lys583 and Lys654 each participate in a glycyl lysine isopeptide (Lys-Gly) (interchain with G-Cter in SUMO2) cross-link. Residues 654–709 (KYNQMPVRHSRNLQLMEGKEPATGAKKSNKPNEQTSKRHDSDTFPELKLTNAPGSF) are disordered. 3 positions are modified to phosphoserine: Ser694, Ser708, and Ser725. Residues Lys734 and Lys739 each participate in a glycyl lysine isopeptide (Lys-Gly) (interchain with G-Cter in SUMO2) cross-link. Phosphoserine is present on residues Ser753 and Ser840. Glycyl lysine isopeptide (Lys-Gly) (interchain with G-Cter in SUMO2) cross-links involve residues Lys918 and Lys987. Position 988 is a phosphoserine; by CHEK2 (Ser988). The residue at position 1009 (Ser1009) is a Phosphoserine. Lys1079 is covalently cross-linked (Glycyl lysine isopeptide (Lys-Gly) (interchain with G-Cter in SUMO2)). At Ser1143 the chain carries Phosphoserine; by ATR; in vitro. A disordered region spans residues 1181–1216 (VQKGELSRSPSPFTHTHLAQGYRRGAKKLESSEENL). A phosphoserine mark is found at Ser1189, Ser1191, Ser1211, Ser1217, and Ser1218. Ser1280 carries the phosphoserine; by ATR; in vitro modification. Residues 1322-1387 (KQMRHQSESQ…VSEDCSGLSS (66 aa)) are disordered. Ser1328, Ser1336, and Ser1342 each carry phosphoserine. Over residues 1373 to 1387 (ESETSVSEDCSGLSS) the composition is skewed to polar residues. Ser1387 bears the Phosphoserine; by ATM and ATR mark. Position 1394 is a phosphothreonine; by ATR; in vitro (Thr1394). An interaction with PALB2 region spans residues 1397 to 1424 (RDTMQHNLIKLQQEMAELEAVLEQHGSQ). Ser1423 is modified (phosphoserine; by ATM and ATR). The interval 1440 to 1505 (EDLRNPEQST…SSPSKCPSLD (66 aa)) is disordered. Positions 1445–1470 (PEQSTSEKAVLTSQKSSEYPISQNPE) are enriched in polar residues. Residue Ser1457 is modified to Phosphoserine; by ATR; in vitro. Residue Ser1524 is modified to Phosphoserine; by ATM. Phosphoserine is present on Ser1542. Positions 1565–1596 (ESGISLFSDDPESDPSEDRAPESARVGNIPSS) are disordered. BRCT domains are found at residues 1642-1736 (STER…DFEV) and 1756-1855 (QDRK…TYLI).

As to quaternary structure, heterodimer with BARD1. Part of the BRCA1-associated genome surveillance complex (BASC), which contains BRCA1, MSH2, MSH6, MLH1, ATM, BLM, PMS2 and the MRE11-RAD50-NBN protein (MRN) complex. This association could be a dynamic process changing throughout the cell cycle and within subnuclear domains. Component of the BRCA1-A complex, at least composed of BRCA1, BARD1, UIMC1/RAP80, ABRAXAS1, BRCC3/BRCC36, BABAM2 and BABAM1/NBA1. Interacts (via the BRCT domains) with ABRAXAS1 (phosphorylated form); this is important for recruitment to sites of DNA damage. Can form a heterotetramer with two molecules of ABRAXAS1 (phosphorylated form). Component of the BRCA1-RBBP8 complex. Interacts (via the BRCT domains) with RBBP8 ('Ser-327' phosphorylated form); the interaction ubiquitinates RBBP8, regulates CHEK1 activation, and involves RBBP8 in BRCA1-dependent G2/M checkpoint control on DNA damage. Associates with RNA polymerase II holoenzyme. Interacts with SMC1A, NELFB, DCLRE1C, CLSPN. Interacts with CHEK1, CHEK2, BAP1, BRCC3, UBXN1 and PCLAF. Interacts (via BRCT domains) with BRIP1 (phosphorylated form). Interacts with FANCD2 (ubiquitinated form). Interacts with H2AX (phosphorylated on 'Ser-140'). Interacts (via the BRCT domains) with ACACA (phosphorylated form); the interaction prevents dephosphorylation of ACACA. Part of a BRCA complex containing BRCA1, BRCA2 and PALB2. Interacts directly with PALB2; the interaction is essential for its function in HRR. Interacts directly with BRCA2; the interaction occurs only in the presence of PALB2 which serves as the bridging protein. Interacts (via the BRCT domains) with LMO4; the interaction represses the transcriptional activity of BRCA1. Interacts (via the BRCT domains) with CCAR2 (via N-terminus); the interaction represses the transcriptional activator activity of BRCA1. Interacts with EXD2. Interacts (via C-terminus) with DHX9; this interaction is direct and links BRCA1 to the RNA polymerase II holoenzyme. Interacts with DNA helicase ZGRF1; the interaction is increased following DNA damage induction. Phosphorylated in response to IR, UV, and various stimuli that cause checkpoint activation, probably by ATM or ATR. Phosphorylation at Ser-988 by CHEK2 regulates mitotic spindle assembly. Phosphorylation by AURKA regulates centrosomal microtubule nucleation. Post-translationally, autoubiquitinated, undergoes 'Lys-6'-linked polyubiquitination. 'Lys-6'-linked polyubiquitination does not promote degradation. Isoform 1 and isoform 3 are widely expressed. Isoform 3 is reduced or absent in several breast and ovarian cancer cell lines.

The protein resides in the nucleus. The protein localises to the chromosome. It localises to the cytoplasm. It carries out the reaction S-ubiquitinyl-[E2 ubiquitin-conjugating enzyme]-L-cysteine + [acceptor protein]-L-lysine = [E2 ubiquitin-conjugating enzyme]-L-cysteine + N(6)-ubiquitinyl-[acceptor protein]-L-lysine.. Its pathway is protein modification; protein ubiquitination. With respect to regulation, the E3 ubiquitin-protein ligase activity is inhibited by phosphorylation by AURKA. Activity is increased by phosphatase treatment. Its function is as follows. E3 ubiquitin-protein ligase that specifically mediates the formation of 'Lys-6'-linked polyubiquitin chains and plays a central role in DNA repair by facilitating cellular responses to DNA damage. It is unclear whether it also mediates the formation of other types of polyubiquitin chains. The BRCA1-BARD1 heterodimer coordinates a diverse range of cellular pathways such as DNA damage repair, ubiquitination and transcriptional regulation to maintain genomic stability. Regulates centrosomal microtubule nucleation. Required for appropriate cell cycle arrests after ionizing irradiation in both the S-phase and the G2 phase of the cell cycle. Required for FANCD2 targeting to sites of DNA damage. Inhibits lipid synthesis by binding to inactive phosphorylated ACACA and preventing its dephosphorylation. Contributes to homologous recombination repair (HRR) via its direct interaction with PALB2, fine-tunes recombinational repair partly through its modulatory role in the PALB2-dependent loading of BRCA2-RAD51 repair machinery at DNA breaks. Component of the BRCA1-RBBP8 complex which regulates CHEK1 activation and controls cell cycle G2/M checkpoints on DNA damage via BRCA1-mediated ubiquitination of RBBP8. Acts as a transcriptional activator. This Homo sapiens (Human) protein is Breast cancer type 1 susceptibility protein (BRCA1).